The following is a 211-amino-acid chain: Thymidylate kinase (211 aa).

Residue 7-14 coordinates ATP; the sequence is GCEGSGKS.

This sequence belongs to the thymidylate kinase family.

The enzyme catalyses dTMP + ATP = dTDP + ADP. In terms of biological role, phosphorylation of dTMP to form dTDP in both de novo and salvage pathways of dTTP synthesis. This is Thymidylate kinase from Chlamydia abortus (strain DSM 27085 / S26/3) (Chlamydophila abortus).